A 432-amino-acid chain; its full sequence is Enolase (432 aa).

Gln167 serves as a coordination point for (2R)-2-phosphoglycerate. Residue Glu209 is the Proton donor of the active site. Residues Asp246, Glu287, and Asp314 each contribute to the Mg(2+) site. Residues Lys339, Arg368, Ser369, and Lys390 each coordinate (2R)-2-phosphoglycerate. Lys339 serves as the catalytic Proton acceptor.

This sequence belongs to the enolase family. Mg(2+) is required as a cofactor.

The protein resides in the cytoplasm. The protein localises to the secreted. Its subcellular location is the cell surface. The enzyme catalyses (2R)-2-phosphoglycerate = phosphoenolpyruvate + H2O. The protein operates within carbohydrate degradation; glycolysis; pyruvate from D-glyceraldehyde 3-phosphate: step 4/5. Catalyzes the reversible conversion of 2-phosphoglycerate (2-PG) into phosphoenolpyruvate (PEP). It is essential for the degradation of carbohydrates via glycolysis. In Prochlorococcus marinus (strain MIT 9211), this protein is Enolase.